Reading from the N-terminus, the 470-residue chain is Siroheme synthase (470 aa).

The tract at residues 1 to 203 (MDYLPIFVEL…GQIQQAEKQL (203 aa)) is precorrin-2 dehydrogenase /sirohydrochlorin ferrochelatase. NAD(+) is bound by residues 22–23 (EV) and 43–44 (PE). Phosphoserine is present on Ser-128. Positions 214 to 470 (GELALVGAGP…ISRPAVVDFA (257 aa)) are uroporphyrinogen-III C-methyltransferase. Pro-223 contributes to the S-adenosyl-L-methionine binding site. Catalysis depends on Asp-246, which acts as the Proton acceptor. Lys-268 serves as the catalytic Proton donor. Residues 299–301 (GGD), Ile-304, 329–330 (TA), Met-381, and Gly-410 contribute to the S-adenosyl-L-methionine site.

In the N-terminal section; belongs to the precorrin-2 dehydrogenase / sirohydrochlorin ferrochelatase family. This sequence in the C-terminal section; belongs to the precorrin methyltransferase family.

The catalysed reaction is uroporphyrinogen III + 2 S-adenosyl-L-methionine = precorrin-2 + 2 S-adenosyl-L-homocysteine + H(+). The enzyme catalyses precorrin-2 + NAD(+) = sirohydrochlorin + NADH + 2 H(+). It carries out the reaction siroheme + 2 H(+) = sirohydrochlorin + Fe(2+). Its pathway is cofactor biosynthesis; adenosylcobalamin biosynthesis; precorrin-2 from uroporphyrinogen III: step 1/1. It functions in the pathway cofactor biosynthesis; adenosylcobalamin biosynthesis; sirohydrochlorin from precorrin-2: step 1/1. The protein operates within porphyrin-containing compound metabolism; siroheme biosynthesis; precorrin-2 from uroporphyrinogen III: step 1/1. It participates in porphyrin-containing compound metabolism; siroheme biosynthesis; siroheme from sirohydrochlorin: step 1/1. Its pathway is porphyrin-containing compound metabolism; siroheme biosynthesis; sirohydrochlorin from precorrin-2: step 1/1. In terms of biological role, multifunctional enzyme that catalyzes the SAM-dependent methylations of uroporphyrinogen III at position C-2 and C-7 to form precorrin-2 via precorrin-1. Then it catalyzes the NAD-dependent ring dehydrogenation of precorrin-2 to yield sirohydrochlorin. Finally, it catalyzes the ferrochelation of sirohydrochlorin to yield siroheme. This is Siroheme synthase from Photorhabdus laumondii subsp. laumondii (strain DSM 15139 / CIP 105565 / TT01) (Photorhabdus luminescens subsp. laumondii).